Here is an 85-residue protein sequence, read N- to C-terminus: U4-theraphotoxin-Hhn1a (85 aa).

The first 22 residues, 1–22 (MKVTLIVILTCAAVLVLHTTAA), serve as a signal peptide directing secretion. Residues 23–48 (EELEAESQLMEVGMPDTELAAVDEER) constitute a propeptide that is removed on maturation. Disulfide bonds link Cys-52-Cys-66, Cys-56-Cys-77, and Cys-71-Cys-82.

It belongs to the neurotoxin 12 (Hwtx-2) family. 02 (Hwtx-2) subfamily. Monomer. In terms of tissue distribution, expressed by the venom gland.

It is found in the secreted. Functionally, neurotoxin active on both insects and mammals. In Cyriopagopus hainanus (Chinese bird spider), this protein is U4-theraphotoxin-Hhn1a.